The following is a 256-amino-acid chain: Thiazole synthase (256 aa).

K97 functions as the Schiff-base intermediate with DXP in the catalytic mechanism. 1-deoxy-D-xylulose 5-phosphate-binding positions include G158, 184 to 185 (AG), and 206 to 207 (NT).

It belongs to the ThiG family. Homotetramer. Forms heterodimers with either ThiH or ThiS.

The protein resides in the cytoplasm. The enzyme catalyses [ThiS sulfur-carrier protein]-C-terminal-Gly-aminoethanethioate + 2-iminoacetate + 1-deoxy-D-xylulose 5-phosphate = [ThiS sulfur-carrier protein]-C-terminal Gly-Gly + 2-[(2R,5Z)-2-carboxy-4-methylthiazol-5(2H)-ylidene]ethyl phosphate + 2 H2O + H(+). It participates in cofactor biosynthesis; thiamine diphosphate biosynthesis. Catalyzes the rearrangement of 1-deoxy-D-xylulose 5-phosphate (DXP) to produce the thiazole phosphate moiety of thiamine. Sulfur is provided by the thiocarboxylate moiety of the carrier protein ThiS. In vitro, sulfur can be provided by H(2)S. The protein is Thiazole synthase of Flavobacterium psychrophilum (strain ATCC 49511 / DSM 21280 / CIP 103535 / JIP02/86).